Here is a 486-residue protein sequence, read N- to C-terminus: Galactose-1-phosphate uridylyltransferase (486 aa).

This sequence belongs to the galactose-1-phosphate uridylyltransferase type 2 family.

Its subcellular location is the cytoplasm. The catalysed reaction is alpha-D-galactose 1-phosphate + UDP-alpha-D-glucose = alpha-D-glucose 1-phosphate + UDP-alpha-D-galactose. It functions in the pathway carbohydrate metabolism; galactose metabolism. This is Galactose-1-phosphate uridylyltransferase from Lacticaseibacillus casei (Lactobacillus casei).